The primary structure comprises 709 residues: Molybdenum cofactor sulfurase (709 aa).

The residue at position 208 (Lys208) is an N6-(pyridoxal phosphate)lysine. Cys367 is a catalytic residue. The MOSC domain maps to 563-707; the sequence is DNALDRQNCR…LESGMSVNFS (145 aa).

This sequence belongs to the class-V pyridoxal-phosphate-dependent aminotransferase family. MOCOS subfamily. Pyridoxal 5'-phosphate is required as a cofactor.

The enzyme catalyses Mo-molybdopterin + L-cysteine + AH2 = thio-Mo-molybdopterin + L-alanine + A + H2O. It participates in cofactor biosynthesis; molybdopterin biosynthesis. Functionally, sulfurates the molybdenum cofactor. Sulfation of molybdenum is essential for xanthine dehydrogenase (XDH) and aldehyde oxidase (ADO) enzymes in which molybdenum cofactor is liganded by 1 oxygen and 1 sulfur atom in active form. This is Molybdenum cofactor sulfurase from Caenorhabditis elegans.